The chain runs to 388 residues: Valine--pyruvate aminotransferase (388 aa).

An N6-(pyridoxal phosphate)lysine modification is found at Lys-234.

This sequence belongs to the class-I pyridoxal-phosphate-dependent aminotransferase family. Pyridoxal 5'-phosphate is required as a cofactor.

It carries out the reaction L-valine + pyruvate = 3-methyl-2-oxobutanoate + L-alanine. This chain is Valine--pyruvate aminotransferase, found in Mycobacterium tuberculosis (strain ATCC 25618 / H37Rv).